The following is a 302-amino-acid chain: Nudix hydrolase 5 (302 aa).

The region spanning 122–254 (SHRIGIGAFV…EGNEMFKLIA (133 aa)) is the Nudix hydrolase domain. Positions 159 to 180 (GTIKEGESIWAGAVREVKEETD) match the Nudix box motif. Mg(2+) contacts are provided by E174 and E178.

Belongs to the Nudix hydrolase family. It depends on Mg(2+) as a cofactor. Mn(2+) is required as a cofactor. As to expression, expressed in roots, stems and leaves.

Probably mediates the hydrolysis of some nucleoside diphosphate derivatives. The sequence is that of Nudix hydrolase 5 (NUDT5) from Arabidopsis thaliana (Mouse-ear cress).